A 343-amino-acid chain; its full sequence is Transmembrane protein 120A (343 aa).

Residues 1-132 (MQPPPPGPLG…KQAKFAYKDE (132 aa)) are Cytoplasmic-facing. Lys-130 provides a ligand contact to CoA. Residues 133–152 (YEKFKLYLTIILILISFTCR) form a helical membrane-spanning segment. Topologically, residues 153–158 (FLLNSR) are extracellular. A helical transmembrane segment spans residues 159-177 (VTDAAFNFLLVWYYCTLTI). Topologically, residues 178-190 (RESILINNGSRIK) are cytoplasmic. 2 residues coordinate CoA: Ser-187 and Arg-188. A helical membrane pass occupies residues 191 to 209 (GWWVFHHYVSTFLSGVMLT). Over 210–218 (WPDGLMYQK) the chain is Extracellular. A helical transmembrane segment spans residues 219-240 (FRNQFLSFSMYQSFVQFLQYYY). Residues Gln-237, Tyr-240, Gln-241, and His-283 each contribute to the CoA site. The Cytoplasmic segment spans residues 241–270 (QSGCLYRLRALGERHTMDLTVEGFQSWMWR). Residues 271-294 (GLTFLLPFLFFGHFWQLFNALTLF) traverse the membrane as a helical segment. The Extracellular portion of the chain corresponds to 295 to 304 (NLAQDPQCKE). Residues 305 to 330 (WQVLMCGFPFLLLFLGNFFTTLRVVH) traverse the membrane as a helical segment. Topologically, residues 331 to 343 (HKFHSQRHGSKKD) are cytoplasmic. Lys-332 is a binding site for CoA.

It belongs to the TMEM120 family. Homodimer. Forms heterooligomer with TMEM120B. Interacts with PKD2; TMEM120A inhibits PKD2 channel activity through the physical association of PKD2 with TMEM120A. Interacts (via C-terminal domain) with STING1; regulates the trafficking of STING1 from the ER to the ER-Golgi intermediate compartment to elicit antiviral effects. As to expression, expressed in nociceptors.

Its subcellular location is the cell membrane. It is found in the nucleus inner membrane. The protein localises to the endoplasmic reticulum. Functionally, multifunctional protein involved in mechanosensation, and plays an essential role in lipid metabolism and adipocyte differentiation. May function as a potential ion channel involved in sensing mechanical stimuli. Mediates the mechanosensitivity of the PKD2-TMEM120A channel complex through direct physical interaction. TMEM120A seems to affect mechanosensation by inhibiting PIEZO2 channels, possibly by altering cellular lipid content. TMEM120A is structurally similar to a lipid-modifying enzyme, ELOVL7, and contains a bound coenzyme A molecule, which suggests it might function as an enzyme in lipid metabolism. Additionnaly, implicated in innate immune response against Zika virus. Acts as a key activator of the antiviral signaling involving STING1. The sequence is that of Transmembrane protein 120A from Homo sapiens (Human).